Consider the following 92-residue polypeptide: PqqA binding protein (92 aa).

Belongs to the PqqD family. As to quaternary structure, monomer. Interacts with PqqE.

It functions in the pathway cofactor biosynthesis; pyrroloquinoline quinone biosynthesis. Functions as a PqqA binding protein and presents PqqA to PqqE, in the pyrroloquinoline quinone (PQQ) biosynthetic pathway. The polypeptide is PqqA binding protein (Pseudomonas aeruginosa (strain UCBPP-PA14)).